A 250-amino-acid chain; its full sequence is Flavin-dependent thymidylate synthase (250 aa).

Residues 7-233 (LRVQLIAKTE…PAVFADFEVT (227 aa)) form the ThyX domain. DUMP is bound by residues 92-95 (ELIR), 103-107 (QLSQR), and arginine 172. FAD contacts are provided by residues 95-97 (RHR) and glutamine 103. The short motif at 95–105 (RHRHFSYSQLS) is the ThyX motif element. FAD is bound by residues 188 to 190 (NYR) and histidine 194. Arginine 199 serves as a coordination point for dUMP. Catalysis depends on arginine 199, which acts as the Involved in ionization of N3 of dUMP, leading to its activation.

It belongs to the thymidylate synthase ThyX family. In terms of assembly, homotetramer. It depends on FAD as a cofactor.

It carries out the reaction dUMP + (6R)-5,10-methylene-5,6,7,8-tetrahydrofolate + NADPH + H(+) = dTMP + (6S)-5,6,7,8-tetrahydrofolate + NADP(+). It functions in the pathway pyrimidine metabolism; dTTP biosynthesis. Its function is as follows. Catalyzes the reductive methylation of 2'-deoxyuridine-5'-monophosphate (dUMP) to 2'-deoxythymidine-5'-monophosphate (dTMP) while utilizing 5,10-methylenetetrahydrofolate (mTHF) as the methyl donor, and NADPH and FADH(2) as the reductant. The polypeptide is Flavin-dependent thymidylate synthase (Mycobacterium marinum (strain ATCC BAA-535 / M)).